Reading from the N-terminus, the 155-residue chain is Transcriptional repressor NrdR (155 aa).

A zinc finger spans residues 3–34 (CPFCHAEETKVVDSRLVADGAQVRRRRECLEC). Residues 49–139 (PLIIKRDGRR…VYKRFKDVSD (91 aa)) form the ATP-cone domain.

The protein belongs to the NrdR family. Requires Zn(2+) as cofactor.

Negatively regulates transcription of bacterial ribonucleotide reductase nrd genes and operons by binding to NrdR-boxes. This chain is Transcriptional repressor NrdR, found in Legionella pneumophila (strain Paris).